A 298-amino-acid polypeptide reads, in one-letter code: Aclacinomycin methylesterase RdmC (298 aa).

The AB hydrolase-1 domain occupies 24-277 (PALLLVMGGN…LAEIPGMGHA (254 aa)). Catalysis depends on residues S102, D248, and H276.

It belongs to the AB hydrolase superfamily. Hydrolase RdmC family. As to quaternary structure, monomer.

The enzyme catalyses aclacinomycin T + H2O = 15-demethylaclacinomycin T + methanol. Its pathway is antibiotic biosynthesis; aclacinomycin biosynthesis. In terms of biological role, involved in the biosynthesis of the anthracycline aclacinomycin which is an aromatic polyketide antibiotic that exhibits high cytotoxicity and is widely applied in the chemotherapy of a variety of cancers. Catalyzes the removal of the methoxy group from the C-15 position of aclacinomycin T and A to yield 15-demethoxyaclacinomycin T and A, respectively. This is Aclacinomycin methylesterase RdmC (rdmC) from Streptomyces purpurascens.